Reading from the N-terminus, the 369-residue chain is H-2 class I histocompatibility antigen, K-K alpha chain (369 aa).

Positions 1–21 are cleaved as a signal peptide; that stretch reads MAPCMLLLLLAAALAPTQTRA. The alpha-1 stretch occupies residues 22 to 111; the sequence is GPHSLRYFHT…ALRYYNQSAG (90 aa). Topologically, residues 22–305 are extracellular; sequence GPHSLRYFHT…EPPPSTVSNT (284 aa). A glycan (N-linked (GlcNAc...) asparagine) is linked at Asn107. Positions 112 to 203 are alpha-2; it reads GSHTFQRMYG…QLGNATLPRT (92 aa). The cysteines at positions 122 and 185 are disulfide-linked. Asn197 is a glycosylation site (N-linked (GlcNAc...) asparagine). Residues 204-295 are alpha-3; it reads DSPKAHVTRH…GLPEPLTLRW (92 aa). The Ig-like C1-type domain maps to 206–294; it reads PKAHVTRHSR…QGLPEPLTLR (89 aa). An intrachain disulfide couples Cys224 to Cys280. The connecting peptide stretch occupies residues 296–305; that stretch reads EPPPSTVSNT. A helical membrane pass occupies residues 306 to 328; sequence VIIAVLVVLGAAIVTGAVVAFVM. Topologically, residues 329-369 are cytoplasmic; that stretch reads KMRRRNTGGKGGDYALAPGSQTSDLSLPDCKVMVHDPHSLA. 2 positions are modified to phosphoserine: Ser351 and Ser354.

It belongs to the MHC class I family. Heterodimer of an alpha chain and a beta chain (beta-2-microglobulin).

The protein localises to the membrane. Its function is as follows. Involved in the presentation of foreign antigens to the immune system. This is H-2 class I histocompatibility antigen, K-K alpha chain (H2-K1) from Mus musculus (Mouse).